The sequence spans 129 residues: Glycine cleavage system H protein (129 aa).

Positions 24–106 constitute a Lipoyl-binding domain; that stretch reads EAVVGITEHA…YGAGWLFRIK (83 aa). At lysine 65 the chain carries N6-lipoyllysine.

This sequence belongs to the GcvH family. As to quaternary structure, the glycine cleavage system is composed of four proteins: P, T, L and H. (R)-lipoate serves as cofactor.

Its function is as follows. The glycine cleavage system catalyzes the degradation of glycine. The H protein shuttles the methylamine group of glycine from the P protein to the T protein. This is Glycine cleavage system H protein from Aeromonas hydrophila subsp. hydrophila (strain ATCC 7966 / DSM 30187 / BCRC 13018 / CCUG 14551 / JCM 1027 / KCTC 2358 / NCIMB 9240 / NCTC 8049).